The chain runs to 263 residues: Acyl-[acyl-carrier-protein]--UDP-N-acetylglucosamine O-acyltransferase (263 aa).

This sequence belongs to the transferase hexapeptide repeat family. LpxA subfamily. In terms of assembly, homotrimer.

It is found in the cytoplasm. It catalyses the reaction a (3R)-hydroxyacyl-[ACP] + UDP-N-acetyl-alpha-D-glucosamine = a UDP-3-O-[(3R)-3-hydroxyacyl]-N-acetyl-alpha-D-glucosamine + holo-[ACP]. The protein operates within glycolipid biosynthesis; lipid IV(A) biosynthesis; lipid IV(A) from (3R)-3-hydroxytetradecanoyl-[acyl-carrier-protein] and UDP-N-acetyl-alpha-D-glucosamine: step 1/6. Functionally, involved in the biosynthesis of lipid A, a phosphorylated glycolipid that anchors the lipopolysaccharide to the outer membrane of the cell. The sequence is that of Acyl-[acyl-carrier-protein]--UDP-N-acetylglucosamine O-acyltransferase from Campylobacter jejuni subsp. jejuni serotype O:2 (strain ATCC 700819 / NCTC 11168).